Here is a 619-residue protein sequence, read N- to C-terminus: DEAD-box ATP-dependent RNA helicase 14 (619 aa).

N-acetylalanine is present on Ala-2. One can recognise a WW domain in the interval 17 to 51 (HTLPKPWKGLIDDRTGYLYFWNPETNVTQYEKPTP). Residues 47-139 (EKPTPSLPPK…APASELSPEA (93 aa)) form a disordered region. Over residues 61-71 (VSVSSSVQVQQ) the composition is skewed to low complexity. Residues 78–93 (PKDDDKYSRGSERVSR) are compositionally biased toward basic and acidic residues. Over residues 125-139 (PLPSSAPASELSPEA) the composition is skewed to low complexity. Ser-136 carries the post-translational modification Phosphoserine. The Q motif motif lies at 158-186 (MSFEATGFPPELLREVLSAGFSAPTPIQA). The region spanning 189-363 (WPIAMQGRDI…ADLLVNPAQV (175 aa)) is the Helicase ATP-binding domain. ATP is bound at residue 202–209 (AKTGSGKT). A DEAD box motif is present at residues 311 to 314 (DEAD). The 145-residue stretch at 392–536 (RLEQILRSQE…RVPPQIREMA (145 aa)) folds into the Helicase C-terminal domain. Residues 528-619 (VPPQIREMAT…FHETMMMKHR (92 aa)) are disordered. The segment covering 552–568 (PSGGRGRGGDSGYGGRG) has biased composition (gly residues). Composition is skewed to basic and acidic residues over residues 582–595 (GRER…ERFN) and 609–619 (SFHETMMMKHR).

Belongs to the DEAD box helicase family. DDX5/DBP2 subfamily. In terms of tissue distribution, ubiquitous. Preferentially expressed in flowers and roots.

The protein resides in the nucleus. The enzyme catalyses ATP + H2O = ADP + phosphate + H(+). Its function is as follows. ATP-dependent RNA helicase involved nonsense-mediated mRNA decay and ribosome biogenesis through rRNA processing. This is DEAD-box ATP-dependent RNA helicase 14 (RH14) from Arabidopsis thaliana (Mouse-ear cress).